The chain runs to 149 residues: Deoxyuridine 5'-triphosphate nucleotidohydrolase (149 aa).

Substrate-binding positions include 68 to 70 (RSG), Asn-81, 85 to 87 (LID), and Met-95.

Belongs to the dUTPase family. Mg(2+) serves as cofactor.

It catalyses the reaction dUTP + H2O = dUMP + diphosphate + H(+). It participates in pyrimidine metabolism; dUMP biosynthesis; dUMP from dCTP (dUTP route): step 2/2. In terms of biological role, this enzyme is involved in nucleotide metabolism: it produces dUMP, the immediate precursor of thymidine nucleotides and it decreases the intracellular concentration of dUTP so that uracil cannot be incorporated into DNA. The chain is Deoxyuridine 5'-triphosphate nucleotidohydrolase from Albidiferax ferrireducens (strain ATCC BAA-621 / DSM 15236 / T118) (Rhodoferax ferrireducens).